Here is a 316-residue protein sequence, read N- to C-terminus: Small kinetochore-associated protein (316 aa).

Ser128 carries the post-translational modification Phosphoserine. The tract at residues 159–316 (VRKGYKPLSK…LKEMEQLLEM (158 aa)) is interaction with SPAG5. Coiled coils occupy residues 166-216 (LSKQ…FRDN) and 248-316 (SMLL…LLEM).

As to quaternary structure, part of an astrin (SPAG5)-kinastrin (SKAP) complex containing KNSTRN, SPAG5, PLK1, DYNLL1 and SGO2. Interacts with SPAG5. Directly binds to microtubules, although at relatively low affinity. Interacts with CENPE; this interaction greatly favors microtubule-binding. Interacts with DSN1/MIS13; leading to localization to kinetochores. Interacts with MAPRE1/EB1; leading to localization to the microtubule plus ends. Interacts with PRPF19. Interacts with DYNLL1. Interacts with MAP4. In terms of tissue distribution, widely expressed, including in skin.

The protein localises to the nucleus. It is found in the chromosome. The protein resides in the centromere. It localises to the kinetochore. Its subcellular location is the cytoplasm. The protein localises to the cytoskeleton. It is found in the spindle pole. The protein resides in the microtubule organizing center. Essential component of the mitotic spindle required for faithful chromosome segregation and progression into anaphase. Promotes the metaphase-to-anaphase transition and is required for chromosome alignment, normal timing of sister chromatid segregation, and maintenance of spindle pole architecture. The astrin (SPAG5)-kinastrin (SKAP) complex promotes stable microtubule-kinetochore attachments. Required for kinetochore oscillations and dynamics of microtubule plus-ends during live cell mitosis, possibly by forming a link between spindle microtubule plus-ends and mitotic chromosomes to achieve faithful cell division. May be involved in UV-induced apoptosis via its interaction with PRPF19; however, these results need additional evidences. The protein is Small kinetochore-associated protein of Homo sapiens (Human).